The sequence spans 230 residues: Demethylmenaquinone methyltransferase (230 aa).

Residues threonine 62, aspartate 80, 100-101 (DG), and serine 117 contribute to the S-adenosyl-L-methionine site.

This sequence belongs to the class I-like SAM-binding methyltransferase superfamily. MenG/UbiE family.

It catalyses the reaction a 2-demethylmenaquinol + S-adenosyl-L-methionine = a menaquinol + S-adenosyl-L-homocysteine + H(+). The protein operates within quinol/quinone metabolism; menaquinone biosynthesis; menaquinol from 1,4-dihydroxy-2-naphthoate: step 2/2. Functionally, methyltransferase required for the conversion of demethylmenaquinol (DMKH2) to menaquinol (MKH2). This chain is Demethylmenaquinone methyltransferase, found in Corynebacterium urealyticum (strain ATCC 43042 / DSM 7109).